Here is a 404-residue protein sequence, read N- to C-terminus: Mevalonate kinase (404 aa).

ATP is bound by residues Lys12, Ser130, and 135–141; that span reads GAGLGSS. Residues Ser141 and Glu184 each contribute to the Mg(2+) site. Asp195 serves as the catalytic Proton acceptor.

The protein belongs to the GHMP kinase family. Mevalonate kinase subfamily. Homodimer. Mg(2+) serves as cofactor.

It localises to the cytoplasm. Its subcellular location is the nucleus. It carries out the reaction (R)-mevalonate + ATP = (R)-5-phosphomevalonate + ADP + H(+). It participates in isoprenoid biosynthesis; isopentenyl diphosphate biosynthesis via mevalonate pathway; isopentenyl diphosphate from (R)-mevalonate: step 1/3. Farnesyl pyrophosphate and geranyl pyrophosphate inhibit mevalonate kinase by binding competitively at the ATP-binding site. In terms of biological role, mevalonate kinase; part of the second module of ergosterol biosynthesis pathway that includes the middle steps of the pathway. Erg12 converts mevalonate into 5-phosphomevalonate. The second module is carried out in the vacuole and involves the formation of farnesyl diphosphate, which is also an important intermediate in the biosynthesis of ubiquinone, dolichol, heme and prenylated proteins. Activity by the mevalonate kinase erg12 first converts mevalonate into 5-phosphomevalonate. 5-phosphomevalonate is then further converted to 5-diphosphomevalonate by the phosphomevalonate kinase erg8. The diphosphomevalonate decarboxylase mvd1 then produces isopentenyl diphosphate. The isopentenyl-diphosphate delta-isomerase idi1 then catalyzes the 1,3-allylic rearrangement of the homoallylic substrate isopentenyl (IPP) to its highly electrophilic allylic isomer, dimethylallyl diphosphate (DMAPP). Finally the farnesyl diphosphate synthase fps1 catalyzes the sequential condensation of isopentenyl pyrophosphate with dimethylallyl pyrophosphate, and then with the resultant geranylpyrophosphate to the ultimate product farnesyl pyrophosphate. This chain is Mevalonate kinase (erg12), found in Schizosaccharomyces pombe (strain 972 / ATCC 24843) (Fission yeast).